Consider the following 260-residue polypeptide: Imidazole glycerol phosphate synthase subunit HisF (260 aa).

Catalysis depends on residues Asp11 and Asp130.

Belongs to the HisA/HisF family. As to quaternary structure, heterodimer of HisH and HisF.

The protein localises to the cytoplasm. The catalysed reaction is 5-[(5-phospho-1-deoxy-D-ribulos-1-ylimino)methylamino]-1-(5-phospho-beta-D-ribosyl)imidazole-4-carboxamide + L-glutamine = D-erythro-1-(imidazol-4-yl)glycerol 3-phosphate + 5-amino-1-(5-phospho-beta-D-ribosyl)imidazole-4-carboxamide + L-glutamate + H(+). Its pathway is amino-acid biosynthesis; L-histidine biosynthesis; L-histidine from 5-phospho-alpha-D-ribose 1-diphosphate: step 5/9. Its function is as follows. IGPS catalyzes the conversion of PRFAR and glutamine to IGP, AICAR and glutamate. The HisF subunit catalyzes the cyclization activity that produces IGP and AICAR from PRFAR using the ammonia provided by the HisH subunit. The chain is Imidazole glycerol phosphate synthase subunit HisF from Caulobacter sp. (strain K31).